Here is a 58-residue protein sequence, read N- to C-terminus: Large ribosomal subunit protein eL37 (58 aa).

Residues C20, C23, C35, and C38 each contribute to the Zn(2+) site. Residues 20-38 (CRRCGEKSYHTKKKVCSSC) form a C4-type zinc finger.

This sequence belongs to the eukaryotic ribosomal protein eL37 family. Requires Zn(2+) as cofactor.

Binds to the 23S rRNA. This Haloquadratum walsbyi (strain DSM 16790 / HBSQ001) protein is Large ribosomal subunit protein eL37.